The following is a 464-amino-acid chain: Sensor histidine kinase Hik34 (464 aa).

The 215-residue stretch at 235-449 (ALTHEVRTPL…ILTIYLKCEQ (215 aa)) folds into the Histidine kinase domain. Histidine 238 carries the post-translational modification Phosphohistidine; by autocatalysis.

When expressed in E.coli autophosphorylates at 18 to 30 degrees Celsius; less phosphorylation occurs at 36 and none occurs at 42 or 48 degrees Celsius.

It catalyses the reaction ATP + protein L-histidine = ADP + protein N-phospho-L-histidine.. Its function is as follows. Member of a two-component system Hik34/Rre1, controlling expression of at least 20 genes in response to hyperosmotic stress (0.5 M sorbitol) or salt (0.5 M NaCl). Represses expression of heat shock genes under normal growth conditions. Required for survival of long-term heat shock exposure. The chain is Sensor histidine kinase Hik34 from Synechocystis sp. (strain ATCC 27184 / PCC 6803 / Kazusa).